The primary structure comprises 299 residues: Serine/threonine-protein kinase 1 (299 aa).

The 239-residue stretch at 39–277 (IATKPMFEGG…FKGLVSHPWF (239 aa)) folds into the Protein kinase domain. Residues 45-53 (FEGGRRNNV) and K66 contribute to the ATP site. The active-site Proton acceptor is the D153.

It belongs to the protein kinase superfamily. Ser/Thr protein kinase family.

The protein resides in the virion. It is found in the host cytoplasm. The enzyme catalyses L-seryl-[protein] + ATP = O-phospho-L-seryl-[protein] + ADP + H(+). The catalysed reaction is L-threonyl-[protein] + ATP = O-phospho-L-threonyl-[protein] + ADP + H(+). Essential for viral replication. It may mediate the virus progression through DNA replication. The polypeptide is Serine/threonine-protein kinase 1 (African swine fever virus (isolate Tick/Malawi/Lil 20-1/1983) (ASFV)).